Reading from the N-terminus, the 97-residue chain is YcgL domain-containing protein Pmen_1774 (97 aa).

One can recognise a YcgL domain in the interval 3-87 (RICSIYKSPR…PEEDYIQHLP (85 aa)).

This Ectopseudomonas mendocina (strain ymp) (Pseudomonas mendocina) protein is YcgL domain-containing protein Pmen_1774.